The following is a 161-amino-acid chain: Large ribosomal subunit protein bL21m (161 aa).

The transit peptide at M1 to S35 directs the protein to the mitochondrion.

Belongs to the bacterial ribosomal protein bL21 family. As to quaternary structure, component of the mitochondrial large ribosomal subunit (mt-LSU). Mature yeast 74S mitochondrial ribosomes consist of a small (37S) and a large (54S) subunit. The 37S small subunit contains a 15S ribosomal RNA (15S mt-rRNA) and 34 different proteins. The 54S large subunit contains a 21S rRNA (21S mt-rRNA) and 46 different proteins.

It is found in the mitochondrion. In terms of biological role, component of the mitochondrial ribosome (mitoribosome), a dedicated translation machinery responsible for the synthesis of mitochondrial genome-encoded proteins, including at least some of the essential transmembrane subunits of the mitochondrial respiratory chain. The mitoribosomes are attached to the mitochondrial inner membrane and translation products are cotranslationally integrated into the membrane. The chain is Large ribosomal subunit protein bL21m (MRPL49) from Saccharomyces cerevisiae (strain ATCC 204508 / S288c) (Baker's yeast).